Consider the following 148-residue polypeptide: Large ribosomal subunit protein bL9 (148 aa).

Belongs to the bacterial ribosomal protein bL9 family.

Its function is as follows. Binds to the 23S rRNA. The protein is Large ribosomal subunit protein bL9 of Pseudomonas fluorescens (strain Pf0-1).